We begin with the raw amino-acid sequence, 111 residues long: Putative protein YddJ (111 aa).

This Escherichia coli (strain K12) protein is Putative protein YddJ (yddJ).